The primary structure comprises 456 residues: MDSASRQHVALIAFPFASHPGNLFAFARALAAAAPDITFSFLTTTFAAATLPPAPPAANLRLCHVADGVPEGGLPPGTTIHGRIGMFLRATPGNFRDGVRAAEEEVGVKVSCVVSDAFLWMTADVAEEIGAQWLPLWTCAPAALLAHVSTDQLRERFGVEKQATAGWADELVDFIPGLSCLRIRDIPDEIVTNWHSDLSILLHRMGNQLTSATAVALNTFDGLDTTIDAALASLFKKTLPIGPLNLLSSPPPLQPGDEKCLSWLDGQEDATVAYVSFGTMVLMPTQSDVSEIAQGLESSGVRFLWSLREEARAGLLPPGFLERTAGRGLVVPWAPQVRVLGHRAVGAFVTHCGWNAVMESVTSGVPMACLPSFADQKTNARMVSAAWGIGEALRGEKVTKEEVVRSMEIVMMGEEGRRMRERIGNLREKAAEAVGPGGSSSENFKSVLEMVRGTAN.

The active-site Proton acceptor is the His19. An an anthocyanidin-binding site is contributed by His19. Catalysis depends on Asp116, which acts as the Charge relay. His147 contributes to the an anthocyanidin binding site. Positions 279, 334, 351, 355, and 359 each coordinate UDP-beta-L-rhamnose. Residue Ala374 participates in an anthocyanidin binding.

It belongs to the UDP-glycosyltransferase family. As to expression, expressed in young cromes.

It carries out the reaction myricetin + UDP-beta-L-rhamnose = myricetin 3-O-alpha-L-rhamnoside + UDP + H(+). Its pathway is flavonoid metabolism. In terms of biological role, rhamnosyltransferase involved in montbretin A (MbA) biosynthesis. Catalyzes the 3-O rhamnosylation of myricetin to produce myricetin 3-O-alpha-L-rhamnoside (MR), a precursor of MbA. MbA is a potent inhibitor of human pancreatic alpha-amylase and is being developed as drug candidate to treat type-2 diabetes. In vitro, is able to transfer UDP-glucose and UDP-xylose with 50-fold less efficiency compared with UDP-rhamnose. In vitro, can use kaempferol or quercetin as substrates, although these two flavonols may not be physiological substrates in vivo. In Crocosmia x crocosmiiflora (Montbretia), this protein is Myricetin 3-O-rhamnosyltransferase UGT77B2.